The following is a 283-amino-acid chain: Aquaporin PIP2-5 (283 aa).

2 helical membrane passes run 37–57 and 74–94; these read AVIA…ATVI and CGGV…FILV. The NPA 1 motif lies at 106–108; the sequence is NPA. The next 3 helical transmembrane spans lie at 125 to 145, 167 to 187, and 199 to 219; these read ILYI…VKGF, GTGL…VFSA, and VPVL…LATI. The short motif at 227 to 229 is the NPA 2 element; it reads NPA. The helical transmembrane segment at 249–269 threads the bilayer; sequence IFWVGPFIGAAIAALYHQIVL.

The protein belongs to the MIP/aquaporin (TC 1.A.8) family. PIP (TC 1.A.8.11) subfamily. In terms of tissue distribution, expressed in roots.

It localises to the cell membrane. Functionally, water channel required to facilitate the transport of water across cell membrane. May play a role in root water uptake. This is Aquaporin PIP2-5 (PIP2-5) from Oryza sativa subsp. japonica (Rice).